A 250-amino-acid polypeptide reads, in one-letter code: tRNA (guanine-N(1)-)-methyltransferase (250 aa).

Residues Gly113 and 133-138 each bind S-adenosyl-L-methionine; that span reads VGDYVL.

The protein belongs to the RNA methyltransferase TrmD family. Homodimer.

The protein resides in the cytoplasm. The catalysed reaction is guanosine(37) in tRNA + S-adenosyl-L-methionine = N(1)-methylguanosine(37) in tRNA + S-adenosyl-L-homocysteine + H(+). In terms of biological role, specifically methylates guanosine-37 in various tRNAs. The protein is tRNA (guanine-N(1)-)-methyltransferase of Proteus mirabilis (strain HI4320).